A 360-amino-acid polypeptide reads, in one-letter code: Photosystem II protein D1 (360 aa).

Transmembrane regions (helical) follow at residues 29–46, 118–133, and 142–156; these read YIGW…TATS, HFLL…EWEF, and WISV…AASA. Residue H118 participates in chlorophyll a binding. Residue Y126 coordinates pheophytin a. Positions 170 and 189 each coordinate [CaMn4O5] cluster. A helical membrane pass occupies residues 197–218; the sequence is LHQLGVAGVFGGSLFSAMHGSL. H198 is a binding site for chlorophyll a. Residues H215 and 264-265 each bind a quinone; that span reads SF. H215 contributes to the Fe cation binding site. Residue H272 coordinates Fe cation. Residues 274 to 288 form a helical membrane-spanning segment; the sequence is FLGLWPVVGIWFTSM. 4 residues coordinate [CaMn4O5] cluster: H332, E333, D342, and A344. Residues 345–360 constitute a propeptide that is removed on maturation; the sequence is SNESLPLALVAPAING.

It belongs to the reaction center PufL/M/PsbA/D family. In terms of assembly, PSII is composed of 1 copy each of membrane proteins PsbA, PsbB, PsbC, PsbD, PsbE, PsbF, PsbH, PsbI, PsbJ, PsbK, PsbL, PsbM, PsbT, PsbX, PsbY, PsbZ, Psb30/Ycf12, at least 3 peripheral proteins of the oxygen-evolving complex and a large number of cofactors. It forms dimeric complexes. Requires The D1/D2 heterodimer binds P680, chlorophylls that are the primary electron donor of PSII, and subsequent electron acceptors. It shares a non-heme iron and each subunit binds pheophytin, quinone, additional chlorophylls, carotenoids and lipids. D1 provides most of the ligands for the Mn4-Ca-O5 cluster of the oxygen-evolving complex (OEC). There is also a Cl(-1) ion associated with D1 and D2, which is required for oxygen evolution. The PSII complex binds additional chlorophylls, carotenoids and specific lipids. as cofactor. In terms of processing, tyr-161 forms a radical intermediate that is referred to as redox-active TyrZ, YZ or Y-Z. Post-translationally, C-terminally processed by CTPA; processing is essential to allow assembly of the oxygen-evolving complex and thus photosynthetic growth.

The protein resides in the plastid. Its subcellular location is the chloroplast thylakoid membrane. It carries out the reaction 2 a plastoquinone + 4 hnu + 2 H2O = 2 a plastoquinol + O2. Its function is as follows. Photosystem II (PSII) is a light-driven water:plastoquinone oxidoreductase that uses light energy to abstract electrons from H(2)O, generating O(2) and a proton gradient subsequently used for ATP formation. It consists of a core antenna complex that captures photons, and an electron transfer chain that converts photonic excitation into a charge separation. The D1/D2 (PsbA/PsbD) reaction center heterodimer binds P680, the primary electron donor of PSII as well as several subsequent electron acceptors. This is Photosystem II protein D1 from Antithamnion sp. (Red alga).